A 321-amino-acid polypeptide reads, in one-letter code: Glucokinase (321 aa).

ATP is bound at residue Gly8–Thr13.

This sequence belongs to the bacterial glucokinase family.

The protein resides in the cytoplasm. The enzyme catalyses D-glucose + ATP = D-glucose 6-phosphate + ADP + H(+). Functionally, not highly important in E.coli as glucose is transported into the cell by the PTS system already as glucose 6-phosphate. In Escherichia coli O139:H28 (strain E24377A / ETEC), this protein is Glucokinase.